We begin with the raw amino-acid sequence, 34 residues long: Mytilin-A (34 aa).

Disulfide bonds link Cys-2–Cys-27, Cys-6–Cys-29, Cys-10–Cys-31, and Cys-15–Cys-34.

It is found in the secreted. Has antibacterial activity against A.viridans, B.megaterium, M.luteus, E.faecalis, S.aureus and E.coli. It is active against the marine species A.carrageenovora, P.alginovora and C.drobachiensis. This Mytilus edulis (Blue mussel) protein is Mytilin-A.